Reading from the N-terminus, the 241-residue chain is uncharacterized protein (241 aa).

S-adenosyl-L-methionine is bound by residues 78–80 (TSA), glycine 111, isoleucine 131, and 138–140 (SSL).

This sequence belongs to the class IV-like SAM-binding methyltransferase superfamily. RNA methyltransferase TrmH family.

This is an uncharacterized protein from Haemophilus influenzae (strain ATCC 51907 / DSM 11121 / KW20 / Rd).